The following is a 412-amino-acid chain: MKIYLVGGAVRDALLGLSVKDRDWVVVGSTPQEMLDAGYQQVGRDFPVFLHPQTHEEYALARTERKSGSGYTGFTCYTAPDVTLEDDLKRRDLTINALAQDDNGEIIDPYNGLGDLQNRLLRHVSPAFGEDPLRVLRVARFAARYAHLGFRIADETLTLMREMTHAGELEHLTPERVWKETESALTTRNPQVFFQVLRDCGALRVLFPEIDALFGVPAPARWHPEIDTGIHTLMTLSMAAMLSPQVDVRFATLCHDLGKGLTPPELWPRHHGHGPAGVKLVEQLCQRLRVPNEIRDLARLVAEFHDLIRTFPMLNPKTIVKLFDSIDAWRKPQRVEQLALTSEADVRGRTGFESADYPQGRWLREGWEVAQSVPTKAVVEAGFKGVEIREELTRRRIAAVASWKEQRCPKPD.

Residues Gly-8 and Arg-11 each contribute to the ATP site. CTP-binding residues include Gly-8 and Arg-11. 2 residues coordinate Mg(2+): Asp-21 and Asp-23. 3 residues coordinate ATP: Arg-91, Arg-137, and Arg-140. The CTP site is built by Arg-91, Arg-137, and Arg-140. Residues Thr-228–Trp-329 enclose the HD domain.

This sequence belongs to the tRNA nucleotidyltransferase/poly(A) polymerase family. Bacterial CCA-adding enzyme type 1 subfamily. As to quaternary structure, monomer. Can also form homodimers and oligomers. The cofactor is Mg(2+). It depends on Ni(2+) as a cofactor.

It catalyses the reaction a tRNA precursor + 2 CTP + ATP = a tRNA with a 3' CCA end + 3 diphosphate. The enzyme catalyses a tRNA with a 3' CCA end + 2 CTP + ATP = a tRNA with a 3' CCACCA end + 3 diphosphate. Its function is as follows. Catalyzes the addition and repair of the essential 3'-terminal CCA sequence in tRNAs without using a nucleic acid template. Adds these three nucleotides in the order of C, C, and A to the tRNA nucleotide-73, using CTP and ATP as substrates and producing inorganic pyrophosphate. tRNA 3'-terminal CCA addition is required both for tRNA processing and repair. Also involved in tRNA surveillance by mediating tandem CCA addition to generate a CCACCA at the 3' terminus of unstable tRNAs. While stable tRNAs receive only 3'-terminal CCA, unstable tRNAs are marked with CCACCA and rapidly degraded. This Shigella flexneri protein is Multifunctional CCA protein.